Here is a 590-residue protein sequence, read N- to C-terminus: Putative histone-lysine N-methyltransferase PRDM6 (590 aa).

A disordered region spans residues 25–87 (QLFPHGGGGP…STPASSSTSA (63 aa)). Residues 29 to 42 (HGGGGPLKGGGAAG) show a composition bias toward gly residues. Positions 71 to 87 (ASLSSASSTPASSSTSA) are enriched in low complexity. Residues 241-360 (REVCLCTSTV…RGTELLVWYN (120 aa)) form the SET domain. Residues 468–490 (WKCGQCFKTFTQRILLQMHVCTQ) form a C2H2-type 1; degenerate zinc finger. C2H2-type zinc fingers lie at residues 496 to 518 (YQCGHCSQSFSQPSELRNHVVTH) and 524 to 546 (FKCGYCGRAFAGATTLNNHIRTH). The C2H2-type 4; degenerate zinc finger occupies 552 to 574 (FKCERCERSFTQATQLSRHQRMP).

This sequence belongs to the class V-like SAM-binding methyltransferase superfamily. Interacts with HDAC1, HDAC2, HDAC3, CBX1 and EP300.

Its subcellular location is the nucleus. The enzyme catalyses L-lysyl(20)-[histone H4] + S-adenosyl-L-methionine = N(6)-methyl-L-lysyl(20)-[histone H4] + S-adenosyl-L-homocysteine + H(+). Putative histone methyltransferase that acts as a transcriptional repressor of smooth muscle gene expression. Promotes the transition from differentiated to proliferative smooth muscle by suppressing differentiation and maintaining the proliferative potential of vascular smooth muscle cells. Also plays a role in endothelial cells by inhibiting endothelial cell proliferation, survival and differentiation. It is unclear whether it has histone methyltransferase activity in vivo. According to some authors, it does not act as a histone methyltransferase by itself and represses transcription by recruiting EHMT2/G9a. According to others, it possesses histone methyltransferase activity when associated with other proteins and specifically methylates 'Lys-20' of histone H4 in vitro. 'Lys-20' methylation represents a specific tag for epigenetic transcriptional repression. This Bos taurus (Bovine) protein is Putative histone-lysine N-methyltransferase PRDM6 (PRDM6).